The following is a 1435-amino-acid chain: Trafficking protein particle complex subunit 8 (1435 aa).

Phosphoserine occurs at positions 273, 279, and 309. Positions 301–321 (QLEQSSDPSNSIDGPDHLRSA) are disordered. Over residues 302-312 (LEQSSDPSNSI) the composition is skewed to polar residues.

It belongs to the TRS85 family. In terms of assembly, component of the multisubunit TRAPP (transport protein particle) complex, which includes TRAPPC2, TRAPPC2L, TRAPPC3, TRAPPC3L, TRAPPC4, TRAPPC5, TRAPPC8, TRAPPC9, TRAPPC10, TRAPPC11 and TRAPPC12. Interacts with TBC1D14. Interacts (via C-terminus) with TMEM131 (via C-terminus); the interaction is direct and is involved in collagen secretion.

It localises to the golgi apparatus. The protein resides in the cis-Golgi network. Plays a role in endoplasmic reticulum to Golgi apparatus trafficking at a very early stage. Maintains together with TBC1D14 the cycling pool of ATG9 required for initiation of autophagy. Involved in collagen secretion. The polypeptide is Trafficking protein particle complex subunit 8 (TRAPPC8) (Homo sapiens (Human)).